A 168-amino-acid chain; its full sequence is Large ribosomal subunit protein uL10 (168 aa).

This sequence belongs to the universal ribosomal protein uL10 family. As to quaternary structure, part of the ribosomal stalk of the 50S ribosomal subunit. The N-terminus interacts with L11 and the large rRNA to form the base of the stalk. The C-terminus forms an elongated spine to which L12 dimers bind in a sequential fashion forming a multimeric L10(L12)X complex.

Its function is as follows. Forms part of the ribosomal stalk, playing a central role in the interaction of the ribosome with GTP-bound translation factors. The polypeptide is Large ribosomal subunit protein uL10 (Acidovorax ebreus (strain TPSY) (Diaphorobacter sp. (strain TPSY))).